Reading from the N-terminus, the 363-residue chain is Neutral protease 2 homolog MEP7 (363 aa).

Residues Met1 to Ser19 form the signal peptide. A propeptide spanning residues Cys20–Arg181 is cleaved from the precursor. Intrachain disulfides connect Cys187-Cys259 and Cys266-Cys284. His308 serves as a coordination point for Zn(2+). Glu309 is an active-site residue. 2 residues coordinate Zn(2+): His312 and Asp323.

The protein belongs to the peptidase M35 family. The cofactor is Zn(2+).

It localises to the secreted. The catalysed reaction is Preferential cleavage of bonds with hydrophobic residues in P1'. Also 3-Asn-|-Gln-4 and 8-Gly-|-Ser-9 bonds in insulin B chain.. Its function is as follows. Secreted metalloproteinase that allows assimilation of proteinaceous substrates. Shows high activities on basic nuclear substrates such as histone and protamine. May be involved in virulence. The chain is Neutral protease 2 homolog MEP7 (MEP7) from Coccidioides posadasii (strain C735) (Valley fever fungus).